The chain runs to 653 residues: MKTIDMKYLRLLAKEYPTIAKTATEIINLEAIMNLPKGTEHFLSDVHGEYSAFEQVLRNGSGVVKRKIRDIFGAELDDAEINSLSTLIYYPEEKMDLLASETEDLQAWYRTTLFRLIELCQYVASKYTRSKVRKAMPEDFAYILEELLHENYNEDDKKLYYEEILQHIISLGRAEEFISALSLLIQQLVVDHLHIVGDVYDRGPYPDKIMDTLMNYHSLDFQWGNHDILWMGAASGSRVCAANVIRISARYLNLDILEDSYGISLRPLALFADEVYKDDPCTYFQPKNEENINYSNAEITQIARMHKAISIIQFKLEGEIINRRKEFDMDHRLLLQFIDYKKGTIHLKGKEYLLLDSHFPTINPEKPYELTDAERELIGKITAAFKNCRRLQKHVQFLYSKGSMFLTYNGNLLYHGCIPLHEDGTFMEMKLRGEKYAGRSLLEQFEILTREAYVRPTGTKEKKYACDIVWYLWTGAISSLFGKSEMTTFERYFVAEKETHTEEKNPYYKLRNNELICKQILEEFGLDGECGHIINGHTPVKEGKGESPIKANGKMLVIDGGFAKAYHKETNLAGYTLLFNSYGLQLVSHQPFTTKEDAIKNETDILSTRQVIEMEINRKRVRDTDIGAKLSEQAEDLKLLLDAYRNGLLHENR.

The protein belongs to the FBPase class 3 family. The cofactor is Mn(2+).

The enzyme catalyses beta-D-fructose 1,6-bisphosphate + H2O = beta-D-fructose 6-phosphate + phosphate. It participates in carbohydrate biosynthesis; gluconeogenesis. This is Fructose-1,6-bisphosphatase class 3 from Listeria monocytogenes serotype 4b (strain CLIP80459).